The chain runs to 423 residues: Methylenetetrahydrofolate--tRNA-(uracil-5-)-methyltransferase TrmFO 2 (423 aa).

8–13 contributes to the FAD binding site; the sequence is GAGLSG.

Belongs to the MnmG family. TrmFO subfamily. It depends on FAD as a cofactor.

It is found in the cytoplasm. It catalyses the reaction uridine(54) in tRNA + (6R)-5,10-methylene-5,6,7,8-tetrahydrofolate + NADH + H(+) = 5-methyluridine(54) in tRNA + (6S)-5,6,7,8-tetrahydrofolate + NAD(+). The catalysed reaction is uridine(54) in tRNA + (6R)-5,10-methylene-5,6,7,8-tetrahydrofolate + NADPH + H(+) = 5-methyluridine(54) in tRNA + (6S)-5,6,7,8-tetrahydrofolate + NADP(+). Its function is as follows. Catalyzes the folate-dependent formation of 5-methyl-uridine at position 54 (M-5-U54) in all tRNAs. The protein is Methylenetetrahydrofolate--tRNA-(uracil-5-)-methyltransferase TrmFO 2 of Mycoplasma capricolum subsp. capricolum (strain California kid / ATCC 27343 / NCTC 10154).